The primary structure comprises 452 residues: Na(+)/H(+) antiporter NhaA (452 aa).

A run of 11 helical transmembrane segments spans residues 23–43 (MMLFLASVLAVIMANSSLSTI), 71–91 (LLQFVNDVLMVIFFLAVGLEI), 108–128 (LPIVGAIGGMIVPVLFFLLVV), 136–156 (GAAIPMSTDIAFALAALAVLG), 165–185 (VFLTALAVADDIGGIIVIALF), 189–209 (HINIGMLAIAFGILFIMYLMG), 216–236 (LGLYFVCTFFVWLFFLQSGIH), 316–336 (IVGYFVLPLFAFANAGITLGG), 349–369 (VFLGLFVGKPLGIYFFTYGFV), 385–405 (LMAVSLFGGIGFTVSLFIATL), and 418–438 (EAKLGIFVASIFAAVVGIVTL).

Belongs to the NhaA Na(+)/H(+) (TC 2.A.33) antiporter family.

It localises to the cell inner membrane. It carries out the reaction Na(+)(in) + 2 H(+)(out) = Na(+)(out) + 2 H(+)(in). Na(+)/H(+) antiporter that extrudes sodium in exchange for external protons. The sequence is that of Na(+)/H(+) antiporter NhaA from Porphyromonas gingivalis (strain ATCC 33277 / DSM 20709 / CIP 103683 / JCM 12257 / NCTC 11834 / 2561).